Consider the following 463-residue polypeptide: Ribosome biogenesis protein NSA1 (463 aa).

Belongs to the NSA1 family. In terms of assembly, component of the pre-66S ribosomal particle. Interacts with NOP7, RRP1 and RRP5.

Its subcellular location is the nucleus. The protein resides in the nucleolus. Its function is as follows. Involved in the biogenesis of the 60S ribosomal subunit. This is Ribosome biogenesis protein NSA1 (NSA1) from Saccharomyces cerevisiae (strain ATCC 204508 / S288c) (Baker's yeast).